Here is a 901-residue protein sequence, read N- to C-terminus: Translation initiation factor IF-2 (901 aa).

The tract at residues 48 to 313 (HLNREHGGSS…SSLQQGFTKP (266 aa)) is disordered. Positions 68-82 (STLSVPGTGGKSKSV) are enriched in polar residues. Positions 106-226 (ALAKREAEEQ…RMAEANEGKW (121 aa)) are enriched in basic and acidic residues. Residues 263 to 277 (ARGRGGKAAKQKKGS) are compositionally biased toward basic residues. The segment covering 278-291 (KLSESKADREEARA) has biased composition (basic and acidic residues). Residues 400-569 (PRAPVVTIMG…LLQAEVLELK (170 aa)) enclose the tr-type G domain. The tract at residues 409–416 (GHVDHGKT) is G1. 409–416 (GHVDHGKT) lines the GTP pocket. Positions 434–438 (GITQH) are G2. The interval 455–458 (DTPG) is G3. GTP is bound by residues 455 to 459 (DTPGH) and 509 to 512 (NKID). The interval 509 to 512 (NKID) is G4. Residues 545 to 547 (SAK) are G5.

The protein belongs to the TRAFAC class translation factor GTPase superfamily. Classic translation factor GTPase family. IF-2 subfamily.

It localises to the cytoplasm. Functionally, one of the essential components for the initiation of protein synthesis. Protects formylmethionyl-tRNA from spontaneous hydrolysis and promotes its binding to the 30S ribosomal subunits. Also involved in the hydrolysis of GTP during the formation of the 70S ribosomal complex. In Edwardsiella ictaluri (strain 93-146), this protein is Translation initiation factor IF-2.